We begin with the raw amino-acid sequence, 1451 residues long: Dicer-like protein 2 (1451 aa).

Positions 34–53 are disordered; the sequence is YDGHLSEEDSPGGKPRPKEQ. The region spanning 70 to 247 is the Helicase ATP-binding domain; that stretch reads MLEASLKENI…LKRLESTLDA (178 aa). Residue 83-90 participates in ATP binding; the sequence is MDTGSGKT. The DEAH box signature appears at 190-193; the sequence is DEAH. In terms of domain architecture, Helicase C-terminal spans 412–582; it reads KVQRIIEVLL…RLEAIENSEA (171 aa). A Dicer dsRNA-binding fold domain is found at 603–704; it reads AKSHLQHFVS…LPLRDRLELE (102 aa). RNase III domains are found at residues 968-1111 and 1153-1351; these read AAEL…VDGG and LQLL…VDAG. A Mg(2+)-binding site is contributed by glutamate 1192. The segment at 1253-1272 is disordered; it reads EGDSDSKSSGDSTSDKASPR. Residues aspartate 1337 and glutamate 1340 each contribute to the Mg(2+) site.

This sequence belongs to the helicase family. Dicer subfamily. It depends on Mg(2+) as a cofactor. Mn(2+) is required as a cofactor.

Its function is as follows. Dicer-like endonuclease involved in cleaving double-stranded RNA in the RNA interference (RNAi) pathway. Produces 21 to 25 bp dsRNAs (siRNAs) which target the selective destruction of homologous RNAs leading to sequence-specific suppression of gene expression, called post-transcriptional gene silencing (PTGS). Part of a broad host defense, DCL-2 is involved in antiviral defense against mycoviruses like the hypovirus CHV1-EP713 and the reovirus MyRV1-Cp9B21. In Cryphonectria parasitica (Chestnut blight fungus), this protein is Dicer-like protein 2 (DCL-2).